The following is a 503-amino-acid chain: CDK5 regulatory subunit-associated protein 3 (503 aa).

3 consecutive short sequence motifs (shuffled ATG8-binding motif) follow at residues 266 to 269, 288 to 291, and 306 to 309; these read IDWG. The required for interaction with UFL1 and mediates interaction with CHEK1 stretch occupies residues 268–503; it reads WGDFGVEAVS…RPVNLMGTSL (236 aa). The tract at residues 352–367 is RPL10a-binding domain (RBD); the sequence is DELMELEIFLSQRAVE. Residue lysine 447 forms a Glycyl lysine isopeptide (Lys-Gly) (interchain with G-Cter in SUMO2) linkage.

Belongs to the CDK5RAP3 family. Substrate adapter component of the UFM1 ribosome E3 ligase (UREL) complex, composed of UFL1, DDRGK1 and CDK5RAP3. Interaction with UFL1 anchors CDK5RAP3 in the cytoplasm, preventing its translocation to the nucleus which allows expression of the CCND1 cyclin and progression of cells through the G1/S transition. Interacts with ATG8 family proteins MAP1LC3A, MAP1LC3B, GABARAP, GABARAPL1 and GABARAPL2. Interacts with CDK5R1; competes with CDK5RAP1 and CDK5RAP2. Interacts with RELA. Interacts with CHEK1; may negatively regulate CHEK1 and thereby stimulate entry into mitosis. Interacts with CDKN2A/ARF and MDM2; forms a ternary complex involved in regulation of p53/TP53. Interacts with MAPK14. Interacts with CCNB1. Interacts with TUBG1; may regulate CDK5RAP3 in mitotic G2/M transition checkpoint. Post-translationally, may be phosphorylated by CDK5. In terms of processing, ubiquitinated. Probably triggers proteasomal degradation and is negatively regulated by UFL1. May be ufmylated. Post-translationally, cleaved by caspases early during apoptosis, the resulting peptides may play a role in rupture of the nuclear envelope. In terms of tissue distribution, widely expressed with higher expression in secretory tissues.

The protein resides in the endoplasmic reticulum membrane. It localises to the cytoplasm. It is found in the nucleus. Its subcellular location is the cytoskeleton. The protein localises to the microtubule organizing center. The protein resides in the centrosome. Functionally, substrate adapter of E3 ligase complexes mediating ufmylation, the covalent attachment of the ubiquitin-like modifier UFM1 to substrate proteins, and which is involved in various processes, such as ribosome recycling and reticulophagy (also called ER-phagy). As part of the UREL complex, plays a key role in ribosome recycling by promoting mono-ufmylation of RPL26/uL24 subunit of the 60S ribosome. Ufmylation of RPL26/uL24 occurs on free 60S ribosomes following ribosome dissociation: it weakens the junction between post-termination 60S subunits and SEC61 translocons, promoting release and recycling of the large ribosomal subunit from the endoplasmic reticulum membrane. Ufmylation of RPL26/uL24 and subsequent 60S ribosome recycling either take place after normal termination of translation or after ribosome stalling during cotranslational translocation at the endoplasmic reticulum. Within the UREL complex, CDK5RAP3 acts as a substrate adapter that constrains UFL1 ligase activity to mono-ufmylate RPL26/uL24 at 'Lys-134'. The UREL complex is also involved in reticulophagy in response to endoplasmic reticulum stress by promoting ufmylation of proteins such as CYB5R3, thereby promoting lysosomal degradation of ufmylated proteins. Also acts as a regulator of transcription: negatively regulates NF-kappa-B-mediated gene transcription through the control of RELA phosphorylation. Also regulates mitotic G2/M transition checkpoint and mitotic G2 DNA damage checkpoint. Through its interaction with CDKN2A/ARF and MDM2 may induce MDM2-dependent p53/TP53 ubiquitination, stabilization and activation in the nucleus, thereby promoting G1 cell cycle arrest and inhibition of cell proliferation. May also play a role in the rupture of the nuclear envelope during apoptosis. May regulate MAPK14 activity by regulating its dephosphorylation by PPM1D/WIP1. Required for liver development. The protein is CDK5 regulatory subunit-associated protein 3 of Mus musculus (Mouse).